We begin with the raw amino-acid sequence, 307 residues long: MANPLYRKHIISINDLSREDLELVLQTAATLKARPQPELLKPKVIASCFFEASTRTRLSFETAIHRLGASVVGFSDSSNTSLGKKGETLADTISVISQYVDAIVIRHPQEGAPRLASEFSGDTPIINAGDGANQHPTQTLLDLFTIQETQQRLDSLNIAMVGDLKYGRTVHSLSQALAKFNGNHFYFIAPEALAMPNHILHMLNEKGATYSQHANIEEVLPELDILYMTRVQKERLDPSEYANVKAQFVLRASDLIGAKENLKVLHPLPRIDEITADVDKTPYAYYFQQAENGIYARQALLSLVLNE.

The carbamoyl phosphate site is built by Arg-55 and Thr-56. L-aspartate is bound at residue Lys-85. Residues Arg-106, His-135, and Gln-138 each coordinate carbamoyl phosphate. L-aspartate contacts are provided by Arg-168 and Arg-230. Positions 268 and 269 each coordinate carbamoyl phosphate.

The protein belongs to the aspartate/ornithine carbamoyltransferase superfamily. ATCase family. Heterododecamer (2C3:3R2) of six catalytic PyrB chains organized as two trimers (C3), and six regulatory PyrI chains organized as three dimers (R2).

The enzyme catalyses carbamoyl phosphate + L-aspartate = N-carbamoyl-L-aspartate + phosphate + H(+). The protein operates within pyrimidine metabolism; UMP biosynthesis via de novo pathway; (S)-dihydroorotate from bicarbonate: step 2/3. Its function is as follows. Catalyzes the condensation of carbamoyl phosphate and aspartate to form carbamoyl aspartate and inorganic phosphate, the committed step in the de novo pyrimidine nucleotide biosynthesis pathway. The chain is Aspartate carbamoyltransferase catalytic subunit from Photorhabdus laumondii subsp. laumondii (strain DSM 15139 / CIP 105565 / TT01) (Photorhabdus luminescens subsp. laumondii).